Reading from the N-terminus, the 508-residue chain is 2,3-bisphosphoglycerate-independent phosphoglycerate mutase (508 aa).

Mn(2+) contacts are provided by Asp-13 and Ser-63. Residue Ser-63 is the Phosphoserine intermediate of the active site. Residues His-122, 152–153, Arg-184, Arg-190, 256–259, and Lys-330 each bind substrate; these read RD and RADR. Asp-397, His-401, Asp-438, His-439, and His-457 together coordinate Mn(2+).

It belongs to the BPG-independent phosphoglycerate mutase family. Monomer. It depends on Mn(2+) as a cofactor.

The enzyme catalyses (2R)-2-phosphoglycerate = (2R)-3-phosphoglycerate. The protein operates within carbohydrate degradation; glycolysis; pyruvate from D-glyceraldehyde 3-phosphate: step 3/5. In terms of biological role, catalyzes the interconversion of 2-phosphoglycerate and 3-phosphoglycerate. The sequence is that of 2,3-bisphosphoglycerate-independent phosphoglycerate mutase from Laribacter hongkongensis (strain HLHK9).